Reading from the N-terminus, the 327-residue chain is Fumigatonoid B endoperoxide isomerase nvfE (327 aa).

The tract at residues 1 to 22 (MGRDQVSHKRSQNSNVSEIPDL) is disordered. Fe cation is bound by residues His-152, Asp-154, and His-234.

It belongs to the PhyH family. Homodimer. Fe cation serves as cofactor.

It catalyses the reaction fumigatonoid B = fumigatonoid C. Its pathway is secondary metabolite biosynthesis; terpenoid biosynthesis. Its function is as follows. Fumigatonoid B endoperoxide isomerase; part of the gene cluster that mediates the biosynthesis of novofumigatonin, a heavily oxygenated meroterpenoid containing a unique orthoester moiety. The first step of the pathway is the synthesis of 3,5-dimethylorsellinic acid (DMOA) by the polyketide synthase nvfA via condensation of one acetyl-CoA starter unit with 3 malonyl-CoA units and 2 methylations. DMOA is then converted to farnesyl-DMOA by the farnesyltransferase nvfB. Epoxydation by FAD-dependent monooxygenase nvfK, followed by a protonation-initiated cyclization catalyzed by the terpene cyclase nvfL leads to the production of asnavolin H. The short chain dehydrogenase nvfC then as a 3-OH dehydrogenase of asnovolin H to yield chemesin D. There are two branches to synthesize asnovolin A from chemesin D. In one branch, chemesin D undergoes Baeyer-Villiger oxidation by nvfH, methylation by nvfJ, and enoyl reduction by the nvfM D enoylreductase that reduces the double bond between C-5'and C-6', to form respectively asnovolin I, asnovolin K, and asnovolin A. In the other branch, the methylation precedes the Baeyer-Villiger oxidation and the enoyl reduction to yield asnovolin A via the asnovolin J intermediate. Asnovolin A is further converted to fumigatonoid A by the Fe(II)/2-oxoglutarate-dependent dioxygenase nvfI that catalyzes an endoperoxidation reaction. The alpha/beta hydrolase nvfD then acts as an epimerase that converts fumigatonoid A to its C-5' epimer, which then undergoes spontaneous or nvfD-catalyzed lactonization. The following step utilizes the ketoreductase nvfG to produce fumigatonoid B. The dioxygenase nvfE further converts fumigatonoid B into fumigatonoid C. Finally the Fe(II)/2-oxoglutarate-dependent dioxygenase nvfF catalyzes two rounds of oxidation to transform fumigatonoid C into the end product, novofumigatonin A. In Aspergillus novofumigatus (strain IBT 16806), this protein is Fumigatonoid B endoperoxide isomerase nvfE.